The following is a 545-amino-acid chain: MALTPSVCSISDVQGLQKDRTFHPSLWGDFFLTYQPPTAPKHAYMAERAEVLKEEVRKMVKSANEIQNILDLILTLQRLGLDNHYENEINELLSFVHDSDYDDKDLNLVSLRFYLLRKHGYDVSSDVFKCFQDKEGNFVVKDTKSLLSLYNAAHLRIHGEEVLDEAIIFTRGKLESVLDSLETTLADEVTLALQTPLFRRVRILETRNYIPIYEKEVARNEVILEFAKLNFNLLQLLYCEELKMITLWWKQLNVETNLSFIRDRIVEMHFWMTGACSEKKYSLTRTITTKMTAYITILDDIMDTHSTTEEAMLLAEAIYRCEENAAELLPEYMKDFYLYLLKTFDSVKHELGPNRSFRVFYLKELLKILVRGYSQEIKWRDEHYVPETIDEHLEVSKATVGAFQVACSSFVGMGDIITKEILDWLLSYPKLLKSMTTFVRLSNDIASTKREQTGGHHASTVQCYMMQHGTTIHDACEKIKELTEDTWKDMMKLYLTPTEQPKVIIQTVLDFARTAEFMYKKTDAFTFSHTIKDTIALLFVEPTLV.

Aspartate 299, aspartate 303, asparagine 443, serine 447, and glutamate 451 together coordinate Mg(2+). The DDXXD motif motif lies at aspartate 299–aspartate 303.

It belongs to the terpene synthase family. The cofactor is Mg(2+). Mn(2+) is required as a cofactor.

The protein localises to the cytoplasm. It catalyses the reaction (2E,6E)-farnesyl diphosphate = beta-sesquiphellandrene + diphosphate. It participates in secondary metabolite biosynthesis; terpenoid biosynthesis. Its function is as follows. Sesquiterpene synthase converting farnesyl diphosphate into beta-sesquiphellandrene and six minor products, zingiberene, 7-epi-sesquithujene, sesquisabinene A, (E)-alpha-bergamotene, (E)-beta-farnesene and beta-bisabolene. Can also accept geranyl diphosphate as substrate, producing nine monoterpenes, with myrcene and limonene as the major products. This is Beta-sesquiphellandrene synthase (TPS2) from Sorghum bicolor (Sorghum).